A 308-amino-acid polypeptide reads, in one-letter code: UDP-N-acetylenolpyruvoylglucosamine reductase (308 aa).

The FAD-binding PCMH-type domain maps to 32–197 (QTGGKADYYL…LEAAFTLAPG (166 aa)). R176 is a catalytic residue. The active-site Proton donor is S226. E296 is a catalytic residue.

This sequence belongs to the MurB family. The cofactor is FAD.

It localises to the cytoplasm. The catalysed reaction is UDP-N-acetyl-alpha-D-muramate + NADP(+) = UDP-N-acetyl-3-O-(1-carboxyvinyl)-alpha-D-glucosamine + NADPH + H(+). The protein operates within cell wall biogenesis; peptidoglycan biosynthesis. In terms of biological role, cell wall formation. This chain is UDP-N-acetylenolpyruvoylglucosamine reductase, found in Staphylococcus saprophyticus subsp. saprophyticus (strain ATCC 15305 / DSM 20229 / NCIMB 8711 / NCTC 7292 / S-41).